Consider the following 669-residue polypeptide: DNA ligase (669 aa).

Residues 34-38 (DAEYD), 83-84 (SL), and glutamate 114 contribute to the NAD(+) site. The N6-AMP-lysine intermediate role is filled by lysine 116. Residues arginine 137, glutamate 171, lysine 287, and lysine 311 each contribute to the NAD(+) site. Residues cysteine 405, cysteine 408, cysteine 423, and cysteine 428 each coordinate Zn(2+). Positions 591 to 669 (NVESYFAGKT…EERFLQELNK (79 aa)) constitute a BRCT domain.

This sequence belongs to the NAD-dependent DNA ligase family. LigA subfamily. Mg(2+) serves as cofactor. Requires Mn(2+) as cofactor.

It carries out the reaction NAD(+) + (deoxyribonucleotide)n-3'-hydroxyl + 5'-phospho-(deoxyribonucleotide)m = (deoxyribonucleotide)n+m + AMP + beta-nicotinamide D-nucleotide.. DNA ligase that catalyzes the formation of phosphodiester linkages between 5'-phosphoryl and 3'-hydroxyl groups in double-stranded DNA using NAD as a coenzyme and as the energy source for the reaction. It is essential for DNA replication and repair of damaged DNA. The chain is DNA ligase from Bacillus cereus (strain ZK / E33L).